A 28-amino-acid polypeptide reads, in one-letter code: Cytochrome b6-f complex subunit 6 (28 aa).

A helical transmembrane segment spans residues valine 2–leucine 22.

Belongs to the PetL family. In terms of assembly, the 4 large subunits of the cytochrome b6-f complex are cytochrome b6, subunit IV (17 kDa polypeptide, PetD), cytochrome f and the Rieske protein, while the 4 small subunits are PetG, PetL, PetM and PetN. The complex functions as a dimer.

It is found in the plastid. The protein resides in the cyanelle thylakoid membrane. In terms of biological role, component of the cytochrome b6-f complex, which mediates electron transfer between photosystem II (PSII) and photosystem I (PSI), cyclic electron flow around PSI, and state transitions. PetL is important for photoautotrophic growth as well as for electron transfer efficiency and stability of the cytochrome b6-f complex. The sequence is that of Cytochrome b6-f complex subunit 6 from Cyanophora paradoxa.